Reading from the N-terminus, the 448-residue chain is Iroquois-class homeodomain protein irx-3 (448 aa).

A DNA-binding region (homeobox; TALE-type) is located at residues 108–170 (DPSRPKNATR…NARRRLKKEN (63 aa)). The tract at residues 171–247 (KMTWAPRSRT…EVSDGFEDLN (77 aa)) is disordered. Residues 195–222 (KHEDEEEIDLENIDTEDIESKEDLDDPD) are compositionally biased toward acidic residues. Residues 223 to 237 (TDIHSDSKTDTRSDS) are compositionally biased toward basic and acidic residues. Acidic residues predominate over residues 238 to 247 (EVSDGFEDLN).

This sequence belongs to the TALE/IRO homeobox family. As to expression, primarily expressed in the developing central nervous system (CNS). At gastrula stage, expressed in both the superficial and deep layers of the presumptive neural plate with expression spreading to the prospective hindbrain, spinal cord and midbrain-hindbrain junction as neurulation proceeds. Not expressed in the anterior neural plate and CNS expression in the tadpole excludes the forebrain. Outside of the CNS, expressed around the closing blastopore at early gastrula stages and as gastrulation proceeds, expression switches to the anterior lateral plate mesoderm. In tadpoles, expressed in the ectodermal layer of the branchial arches, and in the otic vesicle. Also expressed in specific and overlapping dynamic patterns with irx1 and irx2 during pronephric kidney development. Renal expression begins before segment-specific terminal differentiation in the pronephric anlage at mid-neurula stage, and is later found in proximal tubule PT3 as well as intermediate tubule segments IT1 and IT2, with expression in the kidney being maintained through to the tadpole stage.

It is found in the nucleus. Its function is as follows. Acts partially redundantly with other irx members in neural patterning. Required for formation of the posterior forebrain, midbrain, hindbrain, and to a lesser extent, spinal cord. Both up-regulates and down-regulates gene expression during neural development. Acts early in neural plate development to induce proneural gene expression and specify a neural precursor state. Also up-regulates repressors that prevent neuronal differentiation. Required during at least two stages of pronephros kidney development; during neurula stages, maintains transcription of key renal genes to define the size and identity of the pronephric anlage, probably in part through regulation of bmp-signaling. Subsequently required for proper formation of the intermediate tubule segment of the pronephros. This is Iroquois-class homeodomain protein irx-3 (irx3) from Xenopus laevis (African clawed frog).